The primary structure comprises 240 residues: Probable septum site-determining protein MinC (240 aa).

The protein belongs to the MinC family. In terms of assembly, interacts with MinD and FtsZ.

Cell division inhibitor that blocks the formation of polar Z ring septums. Rapidly oscillates between the poles of the cell to destabilize FtsZ filaments that have formed before they mature into polar Z rings. Prevents FtsZ polymerization. In Chromobacterium violaceum (strain ATCC 12472 / DSM 30191 / JCM 1249 / CCUG 213 / NBRC 12614 / NCIMB 9131 / NCTC 9757 / MK), this protein is Probable septum site-determining protein MinC.